The chain runs to 908 residues: Protein translocase subunit SecA (908 aa).

Residues Gln-87, 105–109 (GEGKT), and Asp-512 contribute to the ATP site. Residues 882-908 (DGEKVGRNDPCPCGSGKKYKQCHGKLT) are disordered. Zn(2+) contacts are provided by Cys-892, Cys-894, Cys-903, and His-904. Over residues 898–908 (KKYKQCHGKLT) the composition is skewed to basic residues.

The protein belongs to the SecA family. Monomer and homodimer. Part of the essential Sec protein translocation apparatus which comprises SecA, SecYEG and auxiliary proteins SecDF-YajC and YidC. The cofactor is Zn(2+).

The protein resides in the cell inner membrane. It localises to the cytoplasm. The enzyme catalyses ATP + H2O + cellular proteinSide 1 = ADP + phosphate + cellular proteinSide 2.. In terms of biological role, part of the Sec protein translocase complex. Interacts with the SecYEG preprotein conducting channel. Has a central role in coupling the hydrolysis of ATP to the transfer of proteins into and across the cell membrane, serving both as a receptor for the preprotein-SecB complex and as an ATP-driven molecular motor driving the stepwise translocation of polypeptide chains across the membrane. This is Protein translocase subunit SecA from Shewanella amazonensis (strain ATCC BAA-1098 / SB2B).